The following is a 188-amino-acid chain: Ion-translocating oxidoreductase complex subunit B (188 aa).

Residues 1–26 (MNGVFLAIGALLPICLAGGALLGYAA) form a hydrophobic region. The 4Fe-4S domain occupies 32 to 90 (QGDPVAEQVNALLPQTQCGQCGYPGCKPYAEAIAAGDKINKCPPGGEATIRALADLLDL). [4Fe-4S] cluster contacts are provided by Cys49, Cys52, Cys57, Cys73, Cys113, Cys116, Cys119, Cys123, Cys143, Cys146, Cys149, and Cys153. 2 consecutive 4Fe-4S ferredoxin-type domains span residues 104–133 (RVAYIREAECIGCTKCIQACPVDAIVGAAR) and 134–163 (LMHTVIADECTGCDLCLEPCPVDCIEMRET).

The protein belongs to the 4Fe4S bacterial-type ferredoxin family. RnfB subfamily. In terms of assembly, the complex is composed of six subunits: RnfA, RnfB, RnfC, RnfD, RnfE and RnfG. The cofactor is [4Fe-4S] cluster.

The protein localises to the cell inner membrane. Functionally, part of a membrane-bound complex that couples electron transfer with translocation of ions across the membrane. The protein is Ion-translocating oxidoreductase complex subunit B of Pseudomonas aeruginosa (strain UCBPP-PA14).